The following is a 134-amino-acid chain: uncharacterized protein (134 aa).

3 consecutive transmembrane segments (helical) span residues 9–29 (PYFLAFLRIVVAYMFILHGTA), 49–69 (MLLVAGVIEIVGSILLILGLF), and 107–127 (ALLYSLLFLYFVFSGAGACAL).

It belongs to the DoxX family.

The protein localises to the cell membrane. This is an uncharacterized protein from Haemophilus influenzae (strain ATCC 51907 / DSM 11121 / KW20 / Rd).